The primary structure comprises 320 residues: Heterogeneous nuclear ribonucleoprotein A1 (320 aa).

M1 is modified (N-acetylmethionine). At S2 the chain carries N-acetylserine; in Heterogeneous nuclear ribonucleoprotein A1, N-terminally processed. S2 is subject to Phosphoserine. K3 bears the N6-acetyllysine; alternate mark. K3 participates in a covalent cross-link: Glycyl lysine isopeptide (Lys-Gly) (interchain with G-Cter in SUMO2); alternate. A phosphoserine mark is found at S4 and S6. The segment at 4 to 94 (SESPKEPEQL…EPKRAVSRED (91 aa)) is globular A domain. Residue K8 forms a Glycyl lysine isopeptide (Lys-Gly) (interchain with G-Cter in SUMO2) linkage. 2 RRM domains span residues 14-97 (RKLF…DSQR) and 105-184 (KKIF…LCKQ). At S22 the chain carries Phosphoserine. K78 is covalently cross-linked (Glycyl lysine isopeptide (Lys-Gly) (interchain with G-Cter in SUMO2)). Positions 95–185 (SQRPGAHLTV…EVRKALCKQE (91 aa)) are globular B domain. K113 is covalently cross-linked (Glycyl lysine isopeptide (Lys-Gly) (interchain with G-Cter in SUMO)). Glycyl lysine isopeptide (Lys-Gly) (interchain with G-Cter in SUMO2) cross-links involve residues K179 and K183. Positions 188–216 (SASSSQRGRSGSGNFGGGRGGGFGGNDNF) are disordered. S192 bears the Phosphoserine; by MKNK2 mark. R194 carries the asymmetric dimethylarginine; alternate modification. R194 is subject to Dimethylated arginine; alternate. R194 carries the omega-N-methylarginine; alternate modification. The span at 197–216 (SGSGNFGGGRGGGFGGNDNF) shows a compositional bias: gly residues. S199 carries the post-translational modification Phosphoserine. 4 positions are modified to asymmetric dimethylarginine; alternate: R206, R218, R225, and R232. Dimethylated arginine; alternate is present on R206. R206, R218, R225, and R232 each carry omega-N-methylarginine; alternate. Positions 218 to 240 (RGGNFSGRGGFGGSRGGGGYGGS) are RNA-binding RGG-box. R225 bears the Dimethylated arginine; alternate mark. The interval 268–305 (NQSSNFGPMKGGNFGGRSSGPYGGGGQYFAKPRNQGGY) is nuclear targeting sequence. Residues 271-320 (SNFGPMKGGNFGGRSSGPYGGGGQYFAKPRNQGGYGGSSSSSSYGSGRRF) form a disordered region. Gly residues predominate over residues 276 to 294 (MKGGNFGGRSSGPYGGGGQ). Residue R284 is modified to Omega-N-methylarginine. The residue at position 285 (S285) is a Phosphoserine. K298 is modified (N6-acetyllysine; alternate). Residue K298 forms a Glycyl lysine isopeptide (Lys-Gly) (interchain with G-Cter in SUMO2); alternate linkage. At R300 the chain carries Omega-N-methylarginine. The span at 308–320 (SSSSSSYGSGRRF) shows a compositional bias: low complexity. A Phosphoserine modification is found at S309. A phosphoserine; by MKNK2 mark is found at S310, S311, and S312. Phosphoserine is present on residues S313 and S316. At R318 the chain carries Omega-N-methylarginine.

Identified in the spliceosome C complex. Identified in a IGF2BP1-dependent mRNP granule complex containing untranslated mRNAs. Interacts with SEPT6. Interacts with C9orf72. Interacts with KHDRBS1. Interacts with UBQLN2. Interacts with PPIA/CYPA. In terms of processing, sumoylated.

The protein localises to the nucleus. The protein resides in the cytoplasm. Its function is as follows. Involved in the packaging of pre-mRNA into hnRNP particles, transport of poly(A) mRNA from the nucleus to the cytoplasm and modulation of splice site selection. Plays a role in the splicing of pyruvate kinase PKM by binding repressively to sequences flanking PKM exon 9, inhibiting exon 9 inclusion and resulting in exon 10 inclusion and production of the PKM M2 isoform. Binds to the IRES and thereby inhibits the translation of the apoptosis protease activating factor APAF1. May bind to specific miRNA hairpins. The polypeptide is Heterogeneous nuclear ribonucleoprotein A1 (Hnrnpa1) (Rattus norvegicus (Rat)).